We begin with the raw amino-acid sequence, 88 residues long: Phosphocarrier protein HPr (88 aa).

In terms of domain architecture, HPr spans 1-88 (MVVKTVRVLN…RLFQNKFEEE (88 aa)). H15 serves as the catalytic Pros-phosphohistidine intermediate. Residue S46 is modified to Phosphoserine; by HPrK/P.

It belongs to the HPr family.

The protein resides in the cytoplasm. Its activity is regulated as follows. Phosphorylation on Ser-46 inhibits the phosphoryl transfer from enzyme I to HPr. General (non sugar-specific) component of the phosphoenolpyruvate-dependent sugar phosphotransferase system (sugar PTS). This major carbohydrate active-transport system catalyzes the phosphorylation of incoming sugar substrates concomitantly with their translocation across the cell membrane. The phosphoryl group from phosphoenolpyruvate (PEP) is transferred to the phosphoryl carrier protein HPr by enzyme I. Phospho-HPr then transfers it to the PTS EIIA domain. In Treponema pallidum (strain Nichols), this protein is Phosphocarrier protein HPr (ptsH).